Here is a 372-residue protein sequence, read N- to C-terminus: Putative F-box/kelch-repeat protein At3g22730 (372 aa).

Residues 1–50 (MMMSDLSLDLVEEILSRVPATSLKRLRSTCKLWNALFKNPGFTKKQFLKA) enclose the F-box domain. Kelch repeat units lie at residues 155–204 (ILRC…SFKG), 245–293 (ALSV…PIRG), and 324–372 (KVYI…IIKE).

This Arabidopsis thaliana (Mouse-ear cress) protein is Putative F-box/kelch-repeat protein At3g22730.